A 436-amino-acid polypeptide reads, in one-letter code: UDP-N-acetylmuramate--L-alanine ligase (436 aa).

108-114 (GAHGKTS) is an ATP binding site.

Belongs to the MurCDEF family.

Its subcellular location is the cytoplasm. The enzyme catalyses UDP-N-acetyl-alpha-D-muramate + L-alanine + ATP = UDP-N-acetyl-alpha-D-muramoyl-L-alanine + ADP + phosphate + H(+). It functions in the pathway cell wall biogenesis; peptidoglycan biosynthesis. In terms of biological role, cell wall formation. The sequence is that of UDP-N-acetylmuramate--L-alanine ligase from Bacillus cereus (strain AH187).